We begin with the raw amino-acid sequence, 227 residues long: 2,3-bisphosphoglycerate-dependent phosphoglycerate mutase (227 aa).

Substrate is bound by residues 7 to 14 (RHGLSEWN), 20 to 21 (TG), arginine 59, 86 to 89 (ERHY), lysine 97, 113 to 114 (RR), and 182 to 183 (GN). Histidine 8 acts as the Tele-phosphohistidine intermediate in catalysis. Glutamate 86 serves as the catalytic Proton donor/acceptor.

This sequence belongs to the phosphoglycerate mutase family. BPG-dependent PGAM subfamily. As to quaternary structure, homodimer.

The catalysed reaction is (2R)-2-phosphoglycerate = (2R)-3-phosphoglycerate. The protein operates within carbohydrate degradation; glycolysis; pyruvate from D-glyceraldehyde 3-phosphate: step 3/5. Its function is as follows. Catalyzes the interconversion of 2-phosphoglycerate and 3-phosphoglycerate. This is 2,3-bisphosphoglycerate-dependent phosphoglycerate mutase from Mannheimia succiniciproducens (strain KCTC 0769BP / MBEL55E).